The following is a 420-amino-acid chain: Gamma-glutamyl phosphate reductase (420 aa).

It belongs to the gamma-glutamyl phosphate reductase family.

The protein resides in the cytoplasm. The catalysed reaction is L-glutamate 5-semialdehyde + phosphate + NADP(+) = L-glutamyl 5-phosphate + NADPH + H(+). It functions in the pathway amino-acid biosynthesis; L-proline biosynthesis; L-glutamate 5-semialdehyde from L-glutamate: step 2/2. Catalyzes the NADPH-dependent reduction of L-glutamate 5-phosphate into L-glutamate 5-semialdehyde and phosphate. The product spontaneously undergoes cyclization to form 1-pyrroline-5-carboxylate. The polypeptide is Gamma-glutamyl phosphate reductase (Streptococcus gordonii (strain Challis / ATCC 35105 / BCRC 15272 / CH1 / DL1 / V288)).